Here is a 159-residue protein sequence, read N- to C-terminus: Ribosomal RNA large subunit methyltransferase H (159 aa).

Residues L76, G108, and 127-132 contribute to the S-adenosyl-L-methionine site; that span reads FGRLTL.

This sequence belongs to the RNA methyltransferase RlmH family. As to quaternary structure, homodimer.

The protein resides in the cytoplasm. The enzyme catalyses pseudouridine(1915) in 23S rRNA + S-adenosyl-L-methionine = N(3)-methylpseudouridine(1915) in 23S rRNA + S-adenosyl-L-homocysteine + H(+). Functionally, specifically methylates the pseudouridine at position 1915 (m3Psi1915) in 23S rRNA. The chain is Ribosomal RNA large subunit methyltransferase H from Listeria monocytogenes serovar 1/2a (strain ATCC BAA-679 / EGD-e).